Consider the following 409-residue polypeptide: Serine/threonine transporter SstT (409 aa).

9 helical membrane-spanning segments follow: residues L17–A37, F49–I69, I83–F103, A142–F162, V180–A200, L218–F238, G301–V321, V331–I351, and L357–I377.

This sequence belongs to the dicarboxylate/amino acid:cation symporter (DAACS) (TC 2.A.23) family.

It is found in the cell inner membrane. The enzyme catalyses L-serine(in) + Na(+)(in) = L-serine(out) + Na(+)(out). The catalysed reaction is L-threonine(in) + Na(+)(in) = L-threonine(out) + Na(+)(out). Involved in the import of serine and threonine into the cell, with the concomitant import of sodium (symport system). This Pseudomonas aeruginosa (strain UCBPP-PA14) protein is Serine/threonine transporter SstT.